A 95-amino-acid chain; its full sequence is Large ribosomal subunit protein bL25 (95 aa).

It belongs to the bacterial ribosomal protein bL25 family. As to quaternary structure, part of the 50S ribosomal subunit; part of the 5S rRNA/L5/L18/L25 subcomplex. Contacts the 5S rRNA. Binds to the 5S rRNA independently of L5 and L18.

Functionally, this is one of the proteins that binds to the 5S RNA in the ribosome where it forms part of the central protuberance. In Shewanella baltica (strain OS223), this protein is Large ribosomal subunit protein bL25.